The sequence spans 788 residues: Bifunctional purine biosynthetic protein ADE1 (788 aa).

The segment at 1–430 (MEPIIALLIG…DIAHHALNPK (430 aa)) is GARS. Positions 115-321 (KDFMHRNNIP…LAEIILACVN (207 aa)) constitute an ATP-grasp domain. Residue 141–202 (LDTCTFDVVI…EELLEGEELS (62 aa)) participates in ATP binding. Residues Glu291 and Asn293 each contribute to the Mg(2+) site. The tract at residues 437–769 (LTYENSGVSV…TVYRIGQLVD (333 aa)) is AIRS.

This sequence in the N-terminal section; belongs to the GARS family. The protein in the C-terminal section; belongs to the AIR synthase family. Requires Mg(2+) as cofactor. It depends on Mn(2+) as a cofactor.

The protein localises to the cytoplasm. It localises to the cytosol. It carries out the reaction 5-phospho-beta-D-ribosylamine + glycine + ATP = N(1)-(5-phospho-beta-D-ribosyl)glycinamide + ADP + phosphate + H(+). It catalyses the reaction 2-formamido-N(1)-(5-O-phospho-beta-D-ribosyl)acetamidine + ATP = 5-amino-1-(5-phospho-beta-D-ribosyl)imidazole + ADP + phosphate + H(+). It participates in purine metabolism; IMP biosynthesis via de novo pathway; 5-amino-1-(5-phospho-D-ribosyl)imidazole from N(2)-formyl-N(1)-(5-phospho-D-ribosyl)glycinamide: step 2/2. It functions in the pathway purine metabolism; IMP biosynthesis via de novo pathway; N(1)-(5-phospho-D-ribosyl)glycinamide from 5-phospho-alpha-D-ribose 1-diphosphate: step 2/2. Functionally, catalyzes the second and fifth step in the 'de novo' purine biosynthesis pathway; contains phosphoribosylamine--glycine ligase (GARS) and phosphoribosylformylglycinamidine cyclo-ligase (AIRS) activities. The polypeptide is Bifunctional purine biosynthetic protein ADE1 (Schizosaccharomyces pombe (strain 972 / ATCC 24843) (Fission yeast)).